Consider the following 59-residue polypeptide: Large ribosomal subunit protein bL32 (59 aa).

The segment at 1 to 59 (MAVQQNRKTRSKRGMRRSHDALSAAALSTDATTGEVHRRHHVSPDGFYRGKQVVEARDE) is disordered. Residues 7-16 (RKTRSKRGMR) show a composition bias toward basic residues. Residues 21–33 (ALSAAALSTDATT) are compositionally biased toward low complexity.

The protein belongs to the bacterial ribosomal protein bL32 family.

The chain is Large ribosomal subunit protein bL32 from Marinobacter nauticus (strain ATCC 700491 / DSM 11845 / VT8) (Marinobacter aquaeolei).